We begin with the raw amino-acid sequence, 470 residues long: MSQNIGKISQVIGAVIDVEFEPGKLPPIYNALRVTNPSIDDKENNLVLEVAQHLGENSVRTIAMDSTDGLVRGQAAIDTGKQISVPVGRKTLGRILNVIGDPVDEMGPVGAEKEYGIHREAPAFVDQSTKVEAFTTGIKVVDLLAPYARGGKIGLFGGAGVGKTVLIMELINNIAMQHGGFSVFAGVGERTREGNDLWMEMKESGVLEKTALVYGQMNEPPGARARVALSALSIAEYFRDEEGQNVLLFIDNIFRFTQAGSEVSALLGRIPSAVGYQPTLATEMGELQERITSTNKGSITSVQAIYVPADDLTDPAPATAFAHLDATTVLSRQIAELGIYPAVDPLDSTSRILDPQVIGEEHYAIARQVQYVLQKYKDLQDIIAILGMDELSEEDKLVVARARKIQRFLSQPFHVAEAFTGAPGKYVELKDTIKGFQEIVAGKHDDVPEQAFYLVGTIEEAIEKAKTLAV.

157 to 164 provides a ligand contact to ATP; that stretch reads GGAGVGKT.

This sequence belongs to the ATPase alpha/beta chains family. In terms of assembly, F-type ATPases have 2 components, CF(1) - the catalytic core - and CF(0) - the membrane proton channel. CF(1) has five subunits: alpha(3), beta(3), gamma(1), delta(1), epsilon(1). CF(0) has three main subunits: a(1), b(2) and c(9-12). The alpha and beta chains form an alternating ring which encloses part of the gamma chain. CF(1) is attached to CF(0) by a central stalk formed by the gamma and epsilon chains, while a peripheral stalk is formed by the delta and b chains.

It localises to the cell inner membrane. It catalyses the reaction ATP + H2O + 4 H(+)(in) = ADP + phosphate + 5 H(+)(out). Functionally, produces ATP from ADP in the presence of a proton gradient across the membrane. The catalytic sites are hosted primarily by the beta subunits. The protein is ATP synthase subunit beta of Geotalea uraniireducens (strain Rf4) (Geobacter uraniireducens).